The chain runs to 335 residues: MYIIFALLAFSALILVHELGHFIVAKLNGIYVEEFAIGMGPKLFGVKVGETEYNLRILPFGGFVKMLGEEDESDDSRSLNAKTPIQRILVMGAGAFMNYVLALIIFIGLAMSSGFAENKVASVVPNSPAQEIGIEQGDEFLKIDGNKIHTTDDFRMGLALAKGNPVELEIKRGNDVLTKTVQPILNESGMYQVGISYALVEKPTLLQGIKQGFNETRSLVSQSFIALKTIVTGEANLKTDVGGPVTIIKMSGQAAKAGANTLLWFMAFLSVQLAVFNLLPFPALDGGRIFIELIQMIIRKEIPAKYIEAVNTVGFMLLMGLMVLVTIKDIIFPIL.

His-17 is a Zn(2+) binding site. Residue Glu-18 is part of the active site. His-21 contacts Zn(2+). The next 3 membrane-spanning stretches (helical) occupy residues 88 to 110 (ILVM…IGLA), 262 to 284 (LLWF…FPAL), and 312 to 334 (TVGF…IFPI). One can recognise a PDZ domain in the interval 96-174 (FMNYVLALII…PVELEIKRGN (79 aa)).

Belongs to the peptidase M50B family. It depends on Zn(2+) as a cofactor.

Its subcellular location is the cell membrane. In Clostridium perfringens (strain 13 / Type A), this protein is Putative zinc metalloprotease CPE1693.